We begin with the raw amino-acid sequence, 307 residues long: tRNA dimethylallyltransferase 2 (307 aa).

ATP is bound at residue 11–18 (GPTASGKT). Residue 13-18 (TASGKT) participates in substrate binding. Residues 36-39 (DSRQ) form an interaction with substrate tRNA region.

This sequence belongs to the IPP transferase family. As to quaternary structure, monomer. Requires Mg(2+) as cofactor.

It carries out the reaction adenosine(37) in tRNA + dimethylallyl diphosphate = N(6)-dimethylallyladenosine(37) in tRNA + diphosphate. Its function is as follows. Catalyzes the transfer of a dimethylallyl group onto the adenine at position 37 in tRNAs that read codons beginning with uridine, leading to the formation of N6-(dimethylallyl)adenosine (i(6)A). In Phocaeicola vulgatus (strain ATCC 8482 / DSM 1447 / JCM 5826 / CCUG 4940 / NBRC 14291 / NCTC 11154) (Bacteroides vulgatus), this protein is tRNA dimethylallyltransferase 2.